The chain runs to 130 residues: Small ribosomal subunit protein uS11 (130 aa).

Belongs to the universal ribosomal protein uS11 family. In terms of assembly, part of the 30S ribosomal subunit.

Its function is as follows. Located on the platform of the 30S subunit. This Nanoarchaeum equitans (strain Kin4-M) protein is Small ribosomal subunit protein uS11.